A 120-amino-acid chain; its full sequence is MDKSFTLFLTLTILVVFIISSPPVQAGFANDLGGVAWATTGDNGSGCHGSIAECIGAEEEEMDSEINRRILATTKYISYQSLKRNSVPCSRRGASYYNCQNGAQANPYSRGCSKIARCRS.

Positions 1–26 are cleaved as a signal peptide; sequence MDKSFTLFLTLTILVVFIISSPPVQA. Residues 27-71 constitute a propeptide, removed in mature form; it reads GFANDLGGVAWATTGDNGSGCHGSIAECIGAEEEEMDSEINRRIL. A glycan (N-linked (GlcNAc...) asparagine) is linked at Asn43. 2 disulfide bridges follow: Cys89–Cys99 and Cys112–Cys118.

The protein belongs to the plant rapid alkalinization factor (RALF) family. As to quaternary structure, interacts with FER and promotes its phosphorylation and subsequent activation. Proteolytically cleaved, probably by S1P, a subtilisin-like serine protease (subtilase). As to expression, expressed in roots and stems.

Its subcellular location is the secreted. Its function is as follows. Cell signaling peptide that may regulate plant stress, growth, and development. Mediates a rapid alkalinization of extracellular space by mediating a transient increase in the cytoplasmic Ca(2+) concentration leading to a calcium-dependent signaling events through a cell surface receptor and a concomitant activation of some intracellular mitogen-activated protein kinases. Mostly active in roots. Prevents plant growth (e.g. root and leaf length). Suppresses cell elongation of the primary root by activating the cell surface receptor FER and triggering phosphorylation of AHA2 and subsequent extracellular alkalinization. The polypeptide is Protein RALF-like 1 (RALF1) (Arabidopsis thaliana (Mouse-ear cress)).